A 194-amino-acid polypeptide reads, in one-letter code: uncharacterized protein (194 aa).

CBS domains lie at 13 to 72 (MSFP…PKDV) and 78 to 133 (MSKK…LLEI). Residues 159–192 (YINGICENCGYQGRVRLYQGRYLCDECIEEFEEK) enclose the ACP-type MB domain. 4 residues coordinate Fe cation: Cys164, Cys167, Cys182, and Cys185. Residues Cys164, Cys167, Cys182, and Cys185 each contribute to the Zn(2+) site.

This is an uncharacterized protein from Methanocaldococcus jannaschii (strain ATCC 43067 / DSM 2661 / JAL-1 / JCM 10045 / NBRC 100440) (Methanococcus jannaschii).